The following is a 1985-amino-acid chain: Non-reducing polyketide synthase ntnG (1985 aa).

Residues L7 to H243 form an N-terminal acylcarrier protein transacylase (SAT) domain region. Positions S364–E792 constitute a Ketosynthase family 3 (KS3) domain. Catalysis depends on for beta-ketoacyl synthase activity residues C536, H671, and H711. Positions V889–C1148 are malonyl-CoA:ACP transacylase (MAT) domain. S980 (for acyl/malonyl transferase activity) is an active-site residue. Residues H1261–D1392 form an N-terminal hotdog fold region. Positions H1261 to H1567 constitute a PKS/mFAS DH domain. Positions K1265–L1566 are product template (PT) domain. Catalysis depends on H1293, which acts as the Proton acceptor; for dehydratase activity. The segment at A1414–H1567 is C-terminal hotdog fold. D1479 functions as the Proton donor; for dehydratase activity in the catalytic mechanism. Residues N1578–P1605 are compositionally biased toward polar residues. Positions N1578–S1622 are disordered. The 78-residue stretch at S1622 to E1699 folds into the Carrier domain. S1659 bears the O-(pantetheine 4'-phosphoryl)serine mark. The segment at T1719–K1913 is thioesterase (TE) domain.

Its pathway is secondary metabolite biosynthesis; terpenoid biosynthesis. Non-reducing polyketide synthase; part of the gene cluster that mediates the biosynthesis of the meroterpenoids nectripenoids A and B, as well as cochliquninone D and isocochliquninone E. The pathway probably begins with the HR-PKS ntnH that catalyzes two chain-extension steps to form a reduced triketide, which then primes the SAT domain in the NR-PKS ntnG to initiate three more cycles of extension to give a linear hexaketide corresponding to the polyketide part of nectripenoids. The FAD-dependent monooxygenase ntnJ then performs an oxidative decarboxylation at C11 of the ntnH/ntnG product, via an electrophilic aromatic hydroxylation with concomitant ipso-decarboxylation. The membrane-bound polyprenyl transferase ntnF then introduces a farnesyl group before the FAD-dependent monooxygenase ntnK functions as the first epoxidase on terminal C12'-C13' olefin, followed by a second epoxidation on C7'-C8' catalyzed by ntnA. The terpene cyclase/mutase ntnI then initiates the sequential tricyclic ring formation through protonation of the terminal epoxide and catalyzes the regioselective and stereoselective 6/6/6-tricyclic ring formation. The cytochrome P450 monooxygenase ntnM may then hydroxylate C1'. This chain is Non-reducing polyketide synthase ntnG, found in Nectria sp.